The chain runs to 1326 residues: MNFNNELSDLKNRFLFRTLRVQEYSDVARDRIDFFIWELKFLNCVLHLQSFTFASECGMLDISQKMLEICKRFNTPPPHNAFAYWKEVICKRLCAISIRPDASSDDGFACWKKVIWKTKQEFRAKYSFPKTLLADNKVYDDTNPKFVMEFIDAVVGNLNVLVKINDPSSLHFVPGPKEQIEQVLKELKLLRFFVCFVSNKCTEPQYQYTTFYTHALIEASHIAMVVWLNLPIYGNRNQDLASNEVSCLFSDFMEMKIKSIQPGISRNNIYINVLRALKSTIPHAQDKHAAESGIVETPTHNLMVGLSDQMANLQEMLCLLRDNLIHLPILDLEFHLQDMDSVILDVGLLIYSFYDMKGEKEDTTLEDINRELGFDLPRNIEPIKAMVYLVMQKAFHCNLPRVHGLGYADFLLKNLKDFQGRYSDSLAFLKNQLQVIQTEFESLQPFLKVVVEEPHNKFKRLNEDCAIQIIRKAHEVEYVVDACINKGIPHWCLERWLQDIIEEITCIKAKIQEKNTVDDTMKTVIVRTSSKLARTPRMKEEIVGFEDIIENLRKKLLNGTKGQDVISIHGMPGLGKTTLANRLYSDRSVVSQFDICAQCCVSQVYSYKDLLLSLLCDTIGEESERRELPDNELADMLRKTLLPRRYLILVDDVWENSVWDDLRGCFPDTNNRSRIILTTRHHEVAKYASVHIDPLHLRMFDENESWKFLEKNVFGEESCSPLLRDVGQRIAKMCGQLPFSIVLVAGIPSEMEKEVECWEQVANNLGTRIHNDSRAIVDQSYHVLPCHLKSCFLYFAAFLEDVVIYISRLLRLWISEAFIKSSEGRSLEDIAEGYLENLIGRNLVMVTQRADSDGKVKTCRLHDVLLDFCKKRAAEENFLLWINRDLITKPFSCVYSHKQHAHLAFTEMHNLVEWSASCSFVGSVVLSKKYEPYFSIDLYSFYDFAISRNLPNFKFLKVLDLEHQVFIDFIPTELVYLKYFSAHIKQNSIPSSIYNLWNPETLKLKRPRHVRRCTLLLPSTVWDMVKLRHLYIPDFSTENEEALLENSAKLYDLETLSTPYFSRYHVLNFPIRLEILKLYRSKAFKTIPFCISAPNLKYLKLSGFYLDSQYLSETADHLKNLEVLKLYYVEFGDHREWKVSNGMFPQLKILKLEYLSLMKWIVADDAFPNLEQLYIKVENCNELVVKSAMNIQETQVEDNQNTNFKLVLIEKKTLKLNLSHDEDIPKAFKRLFLCPGIESVSTDRKEKKLTVTGDVDAGSSISCGETEKAWHARVVVPTCQHKCGIVILLTSNELGLGREERKKRRKRRKRRAIKEIIVDIVGGDPY.

Coiled coils occupy residues 421–444 (RYSD…ESLQ) and 536–558 (PRMK…KLLN). 570-577 (GMPGLGKT) is a binding site for ATP. An NB-ARC domain is found at 611–864 (LLSLLCDTIG…KVKTCRLHDV (254 aa)). Positions 749 to 770 (SEMEKEVECWEQVANNLGTRIH) form a coiled coil. LRR repeat units lie at residues 953 to 978 (FKFL…VYLK), 980 to 996 (FSAH…IYNL), 1027 to 1050 (LRHL…SAKL), 1053 to 1070 (LETL…LNFP), 1071 to 1094 (IRLE…ISAP), 1098 to 1118 (YLKL…ADHL), 1119 to 1146 (KNLE…MFPQ), 1167 to 1191 (FPNL…AMNI), and 1208 to 1230 (LIEK…AFKR). Residues 1209–1278 (IEKKTLKLNL…AWHARVVVPT (70 aa)) enclose the HMA domain.

The protein belongs to the disease resistance NB-LRR family.

The protein localises to the cytoplasm. The protein resides in the membrane. Confers resistance to late blight (Phytophthora infestans) races carrying the avirulence gene Avr1. Resistance proteins guard the plant against pathogens that contain an appropriate avirulence protein via an indirect interaction with this avirulence protein. That triggers a defense system including the hypersensitive response, which restricts the pathogen growth. This chain is Putative late blight resistance protein homolog R1B-19 (R1B-19), found in Solanum demissum (Wild potato).